A 296-amino-acid polypeptide reads, in one-letter code: Nucleotide-binding protein Rmet_0297 (296 aa).

8–15 provides a ligand contact to ATP; the sequence is GISGSGKS. 57-60 contacts GTP; sequence DIRS.

It belongs to the RapZ-like family.

In terms of biological role, displays ATPase and GTPase activities. The sequence is that of Nucleotide-binding protein Rmet_0297 from Cupriavidus metallidurans (strain ATCC 43123 / DSM 2839 / NBRC 102507 / CH34) (Ralstonia metallidurans).